Consider the following 314-residue polypeptide: RNA 2',3'-cyclic phosphodiesterase (314 aa).

His43 (proton donor) is an active-site residue. 2 consecutive short sequence motifs (HXTX) follow at residues 43-46 (HITL) and 129-132 (HITI). His129 (proton acceptor) is an active-site residue.

It belongs to the 2H phosphoesterase superfamily. ThpR family.

The catalysed reaction is a 3'-end 2',3'-cyclophospho-ribonucleotide-RNA + H2O = a 3'-end 2'-phospho-ribonucleotide-RNA + H(+). Its function is as follows. Hydrolyzes RNA 2',3'-cyclic phosphodiester to an RNA 2'-phosphomonoester. The sequence is that of RNA 2',3'-cyclic phosphodiesterase from Geobacillus stearothermophilus (Bacillus stearothermophilus).